The primary structure comprises 396 residues: Elongation factor Tu (396 aa).

In terms of domain architecture, tr-type G spans 10–206 (KPHVNVGTIG…ALDSYIPTPE (197 aa)). Residues 19-26 (GHVDHGKT) are G1. 19 to 26 (GHVDHGKT) provides a ligand contact to GTP. Thr-26 serves as a coordination point for Mg(2+). Positions 60 to 64 (GITIN) are G2. The G3 stretch occupies residues 81 to 84 (DCPG). Residues 81–85 (DCPGH) and 136–139 (NKCD) each bind GTP. A G4 region spans residues 136-139 (NKCD). The tract at residues 174-176 (SAK) is G5.

This sequence belongs to the TRAFAC class translation factor GTPase superfamily. Classic translation factor GTPase family. EF-Tu/EF-1A subfamily. As to quaternary structure, monomer.

It is found in the cytoplasm. The catalysed reaction is GTP + H2O = GDP + phosphate + H(+). Its function is as follows. GTP hydrolase that promotes the GTP-dependent binding of aminoacyl-tRNA to the A-site of ribosomes during protein biosynthesis. The protein is Elongation factor Tu of Ralstonia nicotianae (strain ATCC BAA-1114 / GMI1000) (Ralstonia solanacearum).